The sequence spans 474 residues: tRNA-2-methylthio-N(6)-dimethylallyladenosine synthase (474 aa).

The region spanning 3–120 (KKLHIKTWGC…LPEMIEQVRR (118 aa)) is the MTTase N-terminal domain. [4Fe-4S] cluster is bound by residues Cys12, Cys49, Cys83, Cys157, Cys161, and Cys164. One can recognise a Radical SAM core domain in the interval 143–375 (RAEGPTAFVS…QDRITQQAMR (233 aa)). Positions 378–441 (RHMMGTVQRI…TNSLRGVFIR (64 aa)) constitute a TRAM domain.

It belongs to the methylthiotransferase family. MiaB subfamily. Monomer. The cofactor is [4Fe-4S] cluster.

The protein localises to the cytoplasm. It carries out the reaction N(6)-dimethylallyladenosine(37) in tRNA + (sulfur carrier)-SH + AH2 + 2 S-adenosyl-L-methionine = 2-methylsulfanyl-N(6)-dimethylallyladenosine(37) in tRNA + (sulfur carrier)-H + 5'-deoxyadenosine + L-methionine + A + S-adenosyl-L-homocysteine + 2 H(+). In terms of biological role, catalyzes the methylthiolation of N6-(dimethylallyl)adenosine (i(6)A), leading to the formation of 2-methylthio-N6-(dimethylallyl)adenosine (ms(2)i(6)A) at position 37 in tRNAs that read codons beginning with uridine. This Shewanella baltica (strain OS185) protein is tRNA-2-methylthio-N(6)-dimethylallyladenosine synthase.